Here is a 299-residue protein sequence, read N- to C-terminus: Regucalcin (299 aa).

Glu-18 is an a divalent metal cation binding site. Substrate-binding residues include Arg-101, Asn-103, and Glu-121. The a divalent metal cation site is built by Asn-154 and Asp-204. Residue Asp-204 is the Proton donor/acceptor of the active site. Lys-244 and Lys-253 each carry N6-succinyllysine.

The protein belongs to the SMP-30/CGR1 family. As to quaternary structure, monomer. Zn(2+) is required as a cofactor. The cofactor is Mn(2+). It depends on Ca(2+) as a cofactor. Mg(2+) serves as cofactor.

The protein localises to the cytoplasm. The enzyme catalyses D-glucono-1,5-lactone + H2O = D-gluconate + H(+). The protein operates within cofactor biosynthesis; L-ascorbate biosynthesis via UDP-alpha-D-glucuronate pathway; L-ascorbate from UDP-alpha-D-glucuronate: step 3/4. Gluconolactonase with low activity towards other sugar lactones, including gulonolactone and galactonolactone. Catalyzes a key step in ascorbic acid (vitamin C) biosynthesis. Can also hydrolyze diisopropyl phosphorofluoridate and phenylacetate (in vitro). Calcium-binding protein. Modulates Ca(2+) signaling, and Ca(2+)-dependent cellular processes and enzyme activities. The chain is Regucalcin (RGN) from Bos taurus (Bovine).